An 82-amino-acid polypeptide reads, in one-letter code: MTNSPLSYKLIRRSAGNSYCQPSCEPTGRCARSCVHALLWRRTTTARHYSGHLRLAPRMYKRRRPDHMMKRNSPSYTGDHKT.

Residues 60 to 82 are disordered; that stretch reads YKRRRPDHMMKRNSPSYTGDHKT.

This is an uncharacterized protein from Saccharomyces cerevisiae (strain ATCC 204508 / S288c) (Baker's yeast).